The primary structure comprises 261 residues: MRDSKRVVLYISIMVLSIFIIGCGKGNEIKEDAKEEQIKKSFAKTLDMYPIKNLEDLYDKEGYRDGEFKKGDKGMWTIYTDFAKSNRPGVLDNEGMVLNLDRNTRTAKGYYFVDTIYDNHENSYSKNYRVEMKNNKIILLDKVEDQKLKERIENFKFFGQYADFKSLKSYNHGDVSINSNVPSYDAKFKMSNKDENVKQLRSRYNIPTDKAPILKMHIDGDLKGSSVGYKKLEIDFSKEENSELSIVDSLNFQPAKNKDDE.

A signal peptide spans 1–22 (MRDSKRVVLYISIMVLSIFIIG). Cys-23 is lipidated: N-palmitoyl cysteine. Cys-23 carries S-diacylglycerol cysteine lipidation.

The protein belongs to the staphylococcal tandem lipoprotein family.

The protein localises to the cell membrane. This is an uncharacterized protein from Staphylococcus aureus (strain N315).